The following is a 341-amino-acid chain: Serine proteinase inhibitor 2 (341 aa).

The protein belongs to the serpin family. Poxviruses subfamily.

Its subcellular location is the host cytoplasm. Its function is as follows. Viral serpin that inhibits both cysteine and serine proteinases involved in the regulation of host inflammatory and apoptosis processes. Major anti-apoptotic protein which inhibits both intrinsic and extrinsic pathways and strongly cleaves host CASP1 and CASP8 but is a rather poor inhibitor of host CASP3. Prevents the proteolytic activity of host interleukin-1-beta converting enzyme (ICE) and ICE-like enzymes. Can also block apoptosis through host tumor necrosis factor (TNF) receptor. The polypeptide is Serine proteinase inhibitor 2 (OPG199) (Bos taurus (Bovine)).